The chain runs to 1781 residues: MKVAYFSNEFPHDDTRDLFRRLHVHSKDKRYPTLARFISEATSALRDEVAALPTALRALVPTFDSIFSLVDNTAVRQGRLGGAIDGVLLCALHIATFIGFYESDTEEEFDLSAVDTCLAGLGTGLLSTVALSLSPSLADLPTTGALVVGIAFRLGVVVDDVSQNLQPRPAIAESGPGDSWAYVVPDVSPEEIQKELDTIQIAEKTPEPSKIFISALSRTSVTVSGPPARLKHLFLVSAYFRDRKHVALPVYAGLCHAAHIYDEHHVEKIIQSSSLDSISAKYRPRVRVLSTSTGRPFSGLTAKELFRNVIEEILTKSIEWDEVIRGIIQRAKDSAAVECDVLIFRTSLPVHELLATFGTELQQFRASTKDLVSWIAKPDSPPAKPSGKAQSKIAIVGMACRLPGGSTDPDKFWDLLEKGLDVHRKIPADRFDVDSHYDPEGKRMNASWTPYGCFIDEPGLFDAPFFNMSPREALQTDPMQRLALVTAYEALEKAGVVPNRTAATDAHRIGTYYGQASDDYREVNTAQEISTYFITGGCRAFGPGRINYFFKFSGPSYSVDTACSSGLAAIQACTSLWAGEVETAIAGGVNVLTNCDAFAGLSNGHFLTKTPNACKTWDCDADGYCRADGVVSLVLKRLEDAEADNDNILGVILGAGTNHSADAVSITHPHAGAQAFLTSQTVRKAGVDPFDISYIEMHGTGTQAGDAQEILSVTEVFAPLTRRRTSKQPLYIGSVKANVGHGEAVSGPTALVKLLLMFQKEAIPAHVGIKNSINPGFPKDLAKRNLHIPYEQTPWPRVPGKKRIAVVNNFSAAGGNTSVVVEEASVREPVKGTDPRSSHLITVSAKSKVSLKGNLERLIAYVEANPDVSLADLAYTTTARRRHHNHRVAVAASDAAQLKKQLGSYLQSVESHKPIPSTGQPPVVFAFTGQGASHPSMNLELFHHSPYFRAQLLHLDSLAQQQGFGSFIPVVDGSHERSHAHSPTATQLALVCVEIALAKYWESLGVKPDVVIGHSLGEYAALHVAGVLSASDAISMVGRRAALLEQKCQTGSHQMLAVRASLADIQAIVHDKPYEVSCINGPRDTVLSGTREQVAVLTEVLQAAGHRCISLDVAFAFHSAQTDPILEEFEEVTKSSILFQPPNLPIISPLLGKVIFDEKTVNATYVRRATREAVNFLGAIEIAQQMSTIDETMAWIEIGPHPVCINFVKSILPRVNVAVPSIRRGEDNWQTVSHSLGLLHCAGLELNWNEFHLAFEENLRLVDLPTYAWNDKTHWIQYIGDWALTKGNTFYDAEKAAANPGALVHTRSNIKTSTVQQIIEETFSDSAATVVMQSNLMEPDFLAAAHGHRMNDCGVVTSSIHADIAYTLGAYIMKKLRPKSQNVGMDIANLEVLKGLIAQKNTDKPQFIQVSAQVHDIDLGVAHLQWHNVSSNGEVDEPFASADIVYGLPTDWLKSWVPATHLVQGRIEALERLAEAGIANRLSHNMAYLLFANNLVDYAQKYRGMQSVVMHELEAFADVTLTTEKGGVWTVPPYFIDSVAHLAGFVMNVSDANDTKQNFCVTPGWGSMRFAKPLVAGQKYRSYVKMIPTEEDPTVYLGDVYVLQDGVIIGEVGAIKFRRYPRVLLNRFFSAPDSDTSKHTSATDVSPPKKVVQSASTTTTVTKALPSKPVAIPAPQVAAPVVQPTEQVTVVKAVTELTSTVEVDSDSTASKAMALVAAEGGLELSDLPDDANFANLGVDSLMSLVIAEKFREQLGVTVNGSLFLEYPTVGDLKAWLMEYYS.

Residues 15-253 form an N-terminal acylcarrier protein transacylase domain (SAT) region; that stretch reads TRDLFRRLHV…KHVALPVYAG (239 aa). The 434-residue stretch at 390-823 folds into the Ketosynthase family 3 (KS3) domain; it reads QSKIAIVGMA…GGNTSVVVEE (434 aa). Catalysis depends on for beta-ketoacyl synthase activity residues Cys-563, His-698, and His-741. Residues 925-1244 are malonyl-CoA:ACP transacylase (MAT) domain; sequence FAFTGQGASH…SLGLLHCAGL (320 aa). The product template (PT) domain stretch occupies residues 1312 to 1631; the sequence is TSTVQQIIEE…RVLLNRFFSA (320 aa). Residues 1316–1451 form an N-terminal hotdog fold region; it reads QQIIEETFSD…ADIVYGLPTD (136 aa). The PKS/mFAS DH domain occupies 1316–1626; sequence QQIIEETFSD…FRRYPRVLLN (311 aa). Residue His-1348 is the Proton acceptor; for dehydratase activity of the active site. Residues 1478 to 1626 are C-terminal hotdog fold; it reads IANRLSHNMA…FRRYPRVLLN (149 aa). Asp-1537 functions as the Proton donor; for dehydratase activity in the catalytic mechanism. The disordered stretch occupies residues 1633-1653; it reads DSDTSKHTSATDVSPPKKVVQ. In terms of domain architecture, Carrier spans 1703–1780; that stretch reads VDSDSTASKA…DLKAWLMEYY (78 aa). Ser-1740 is subject to O-(pantetheine 4'-phosphoryl)serine.

It carries out the reaction holo-[ACP] + 8 malonyl-CoA + 8 H(+) = atrochrysone carboxyl-[ACP] + 8 CO2 + 8 CoA + 2 H2O. It participates in secondary metabolite biosynthesis. Atrochrysone carboxylic acid synthase; part of the gene cluster that mediates the biosynthesis of the dimeric xanthones cryptosporioptides. The pathway begins with the synthesis of atrochrysone thioester by the polyketide synthase dmx-nrPKS. The atrochrysone carboxyl ACP thioesterase dmxR1 then breaks the thioester bond and releases the atrochrysone carboxylic acid from dmx-nrPKS. Atrochrysone carboxylic acid is decarboxylated by the decarboxylase dmxR15, and oxidized by the anthrone oxygenase dmxR16 to yield emodin. Emodin is then reduced to emodin hydroquinone by the oxidoreductase dmxR7. A-ring reduction by the short chain dehydrogenase dmxR18, dehydration by the scytalone dehydratase-like protein dmxR17 and probable spontaneous re-oxidation, results in overall deoxygenation to chrysophanol. Baeyer-Villiger oxidation by the Baeyer-Villiger monooxygenase (BVMO) dmxR6 then yields monodictylactone in equilibrium with monodictyphenone. In the case of the cryptosporioptides biosynthesis, monodictylactone is reduced at C-12 to an alcohol (by the short chain dehydrogenases dmxR12 or dmxR8) and hydroxylated at C-5 by dmxR9, yielding the electron-rich aromatic which could eliminate H(2)O to form the ortho-quinonemethide, followed by tautomerisation to paraquinone and complete the formal reduction to produce the 10-methylgroup. Conjugate addition of C-4a-OH to the resulting paraquinone by the monooxygenase dmxR10 then gives cyclohexadienone, which is then reduced at C-5 by the short chain dehydrogenase dmxR3 to give the dihydroxanthone. The 6,7-epoxide in the cryptosporioptides could be introduced by the cytochrome P450 monooxygenase dmxL3. The highly reducing PKS dmxL2 manufactures butyrate, which is further carboxylated by dmxL1 to form ethylmalonate. It is not yet clear whether the carboxylation occurs while the butyrate is attached to the ACP of dmxL2, but this unusual fungal metabolite could then be esterified to O-5 by the O-acetyltransferase dmxR13. Finally, dimerization performed by dmxR5 gives the observed dimers cryptosporioptides A, B and C as the final products of the pathway. This chain is Atrochrysone carboxylic acid synthase, found in Cryptosporiopsis sp. (strain 8999).